The primary structure comprises 346 residues: DNA primase small subunit PriS (346 aa).

Catalysis depends on residues D97, D99, and D280.

The protein belongs to the eukaryotic-type primase small subunit family. As to quaternary structure, heterodimer of a small subunit (PriS) and a large subunit (PriL). Mg(2+) is required as a cofactor. Mn(2+) serves as cofactor.

In terms of biological role, catalytic subunit of DNA primase, an RNA polymerase that catalyzes the synthesis of short RNA molecules used as primers for DNA polymerase during DNA replication. The small subunit contains the primase catalytic core and has DNA synthesis activity on its own. Binding to the large subunit stabilizes and modulates the activity, increasing the rate of DNA synthesis while decreasing the length of the DNA fragments, and conferring RNA synthesis capability. The DNA polymerase activity may enable DNA primase to also catalyze primer extension after primer synthesis. May also play a role in DNA repair. The chain is DNA primase small subunit PriS from Thermococcus kodakarensis (strain ATCC BAA-918 / JCM 12380 / KOD1) (Pyrococcus kodakaraensis (strain KOD1)).